A 444-amino-acid polypeptide reads, in one-letter code: UDP-N-acetylmuramate--L-alanine ligase (444 aa).

An ATP-binding site is contributed by 110 to 116 (GAHGKTS).

Belongs to the MurCDEF family.

The protein localises to the cytoplasm. The catalysed reaction is UDP-N-acetyl-alpha-D-muramate + L-alanine + ATP = UDP-N-acetyl-alpha-D-muramoyl-L-alanine + ADP + phosphate + H(+). Its pathway is cell wall biogenesis; peptidoglycan biosynthesis. Cell wall formation. This Streptococcus pneumoniae (strain P1031) protein is UDP-N-acetylmuramate--L-alanine ligase.